Consider the following 126-residue polypeptide: Large ribosomal subunit protein bL19 (126 aa).

This sequence belongs to the bacterial ribosomal protein bL19 family.

Functionally, this protein is located at the 30S-50S ribosomal subunit interface and may play a role in the structure and function of the aminoacyl-tRNA binding site. The sequence is that of Large ribosomal subunit protein bL19 from Dechloromonas aromatica (strain RCB).